Consider the following 151-residue polypeptide: Putative pre-16S rRNA nuclease (151 aa).

It belongs to the YqgF nuclease family.

The protein resides in the cytoplasm. Could be a nuclease involved in processing of the 5'-end of pre-16S rRNA. The chain is Putative pre-16S rRNA nuclease from Prochlorococcus marinus subsp. pastoris (strain CCMP1986 / NIES-2087 / MED4).